A 1055-amino-acid chain; its full sequence is Type I restriction enzyme HindI endonuclease subunit (1055 aa).

One can recognise a Helicase ATP-binding domain in the interval 287–468; the sequence is TSEKGDRRIG…QDVFGRYVSI (182 aa).

Belongs to the HsdR family. In terms of assembly, the type I restriction/modification system is composed of three polypeptides R, M and S; the restriction enzyme has stoichiometry R(2)M(2)S(1) while the methyltransferase is M(2)S(1).

It catalyses the reaction Endonucleolytic cleavage of DNA to give random double-stranded fragments with terminal 5'-phosphates, ATP is simultaneously hydrolyzed.. In terms of biological role, the restriction (R) subunit of a type I restriction enzyme that recognizes 5'-RAACN(5)TAG-3' and cleaves a random distance away. Subunit R is required for both nuclease and ATPase activities, but not for modification. After locating a non-methylated recognition site, the enzyme complex serves as a molecular motor that translocates DNA in an ATP-dependent manner until a collision occurs that triggers cleavage. The sequence is that of Type I restriction enzyme HindI endonuclease subunit from Haemophilus influenzae (strain ATCC 51907 / DSM 11121 / KW20 / Rd).